The primary structure comprises 432 residues: 3-phosphoshikimate 1-carboxyvinyltransferase (432 aa).

Positions 22, 23, and 27 each coordinate 3-phosphoshikimate. K22 is a phosphoenolpyruvate binding site. Positions 96 and 127 each coordinate phosphoenolpyruvate. 7 residues coordinate 3-phosphoshikimate: S173, S174, Q175, S201, D316, N339, and K343. Q175 contributes to the phosphoenolpyruvate binding site. Catalysis depends on D316, which acts as the Proton acceptor. Phosphoenolpyruvate-binding residues include R347, R391, and K416.

It belongs to the EPSP synthase family. In terms of assembly, monomer.

The protein localises to the cytoplasm. The enzyme catalyses 3-phosphoshikimate + phosphoenolpyruvate = 5-O-(1-carboxyvinyl)-3-phosphoshikimate + phosphate. It functions in the pathway metabolic intermediate biosynthesis; chorismate biosynthesis; chorismate from D-erythrose 4-phosphate and phosphoenolpyruvate: step 6/7. Functionally, catalyzes the transfer of the enolpyruvyl moiety of phosphoenolpyruvate (PEP) to the 5-hydroxyl of shikimate-3-phosphate (S3P) to produce enolpyruvyl shikimate-3-phosphate and inorganic phosphate. The polypeptide is 3-phosphoshikimate 1-carboxyvinyltransferase (Histophilus somni (Haemophilus somnus)).